Here is a 681-residue protein sequence, read N- to C-terminus: Terpene synthase 6, chloroplastic (681 aa).

Asp433, Asp437, Asn577, and Glu585 together coordinate Mg(2+). The DDXXD motif motif lies at 433–437 (DDLFD).

This sequence belongs to the terpene synthase family. It depends on Mg(2+) as a cofactor. Expressed in leaves.

The protein localises to the plastid. It is found in the chloroplast. It participates in secondary metabolite biosynthesis; terpenoid biosynthesis. Functionally, may be involved in the biosynthesis of ent-kaurene diterpenoids natural products such as oridonin, miltiradiene, eriocalyxin B and nezukol, known to exhibit antitumor, anti-inflammatory and antibacterial activities. This is Terpene synthase 6, chloroplastic from Isodon rubescens (Rabdosia rubescens).